A 348-amino-acid polypeptide reads, in one-letter code: Phospho-2-dehydro-3-deoxyheptonate aldolase, Trp-sensitive (348 aa).

Belongs to the class-I DAHP synthase family.

The catalysed reaction is D-erythrose 4-phosphate + phosphoenolpyruvate + H2O = 7-phospho-2-dehydro-3-deoxy-D-arabino-heptonate + phosphate. It functions in the pathway metabolic intermediate biosynthesis; chorismate biosynthesis; chorismate from D-erythrose 4-phosphate and phosphoenolpyruvate: step 1/7. Stereospecific condensation of phosphoenolpyruvate (PEP) and D-erythrose-4-phosphate (E4P) giving rise to 3-deoxy-D-arabino-heptulosonate-7-phosphate (DAHP). In Salmonella typhimurium (strain LT2 / SGSC1412 / ATCC 700720), this protein is Phospho-2-dehydro-3-deoxyheptonate aldolase, Trp-sensitive (aroH).